The primary structure comprises 147 residues: Deoxyuridine 5'-triphosphate nucleotidohydrolase (147 aa).

Residues arginine 63–glycine 65, asparagine 76, and threonine 80–aspartate 82 each bind substrate.

This sequence belongs to the dUTPase family. Mg(2+) serves as cofactor.

The enzyme catalyses dUTP + H2O = dUMP + diphosphate + H(+). It functions in the pathway pyrimidine metabolism; dUMP biosynthesis; dUMP from dCTP (dUTP route): step 2/2. Functionally, this enzyme is involved in nucleotide metabolism: it produces dUMP, the immediate precursor of thymidine nucleotides and it decreases the intracellular concentration of dUTP so that uracil cannot be incorporated into DNA. The sequence is that of Deoxyuridine 5'-triphosphate nucleotidohydrolase from Chlamydia felis (strain Fe/C-56) (Chlamydophila felis).